The chain runs to 244 residues: 7-cyano-7-deazaguanine synthase (244 aa).

14–24 (FSGGQDSATCV) contributes to the ATP binding site. Positions 202, 217, 220, and 223 each coordinate Zn(2+).

This sequence belongs to the QueC family. The cofactor is Zn(2+).

The enzyme catalyses 7-carboxy-7-deazaguanine + NH4(+) + ATP = 7-cyano-7-deazaguanine + ADP + phosphate + H2O + H(+). Its pathway is purine metabolism; 7-cyano-7-deazaguanine biosynthesis. Functionally, catalyzes the ATP-dependent conversion of 7-carboxy-7-deazaguanine (CDG) to 7-cyano-7-deazaguanine (preQ(0)). This Burkholderia cenocepacia (strain ATCC BAA-245 / DSM 16553 / LMG 16656 / NCTC 13227 / J2315 / CF5610) (Burkholderia cepacia (strain J2315)) protein is 7-cyano-7-deazaguanine synthase.